Reading from the N-terminus, the 227-residue chain is Cytochrome c oxidase subunit 2 (227 aa).

The Mitochondrial intermembrane portion of the chain corresponds to 1–14 (MAYPLQMGLQDATS). The chain crosses the membrane as a helical span at residues 15–45 (PIMEELLHFHDHTLMIVFLISSLVLYIISLM). At 46–59 (LTTKLTHTSTMDAQ) the chain is on the mitochondrial matrix side. A helical transmembrane segment spans residues 60-87 (EVETVWTILPAIILILIALPSLRILYMM). At 88–227 (DEINNPSLTV…HFEKWSTSML (140 aa)) the chain is on the mitochondrial intermembrane side. Positions 161, 196, 198, 200, 204, and 207 each coordinate Cu cation. Glutamate 198 lines the Mg(2+) pocket.

Belongs to the cytochrome c oxidase subunit 2 family. As to quaternary structure, component of the cytochrome c oxidase (complex IV, CIV), a multisubunit enzyme composed of 14 subunits. The complex is composed of a catalytic core of 3 subunits MT-CO1, MT-CO2 and MT-CO3, encoded in the mitochondrial DNA, and 11 supernumerary subunits COX4I, COX5A, COX5B, COX6A, COX6B, COX6C, COX7A, COX7B, COX7C, COX8 and NDUFA4, which are encoded in the nuclear genome. The complex exists as a monomer or a dimer and forms supercomplexes (SCs) in the inner mitochondrial membrane with NADH-ubiquinone oxidoreductase (complex I, CI) and ubiquinol-cytochrome c oxidoreductase (cytochrome b-c1 complex, complex III, CIII), resulting in different assemblies (supercomplex SCI(1)III(2)IV(1) and megacomplex MCI(2)III(2)IV(2)). Found in a complex with TMEM177, COA6, COX18, COX20, SCO1 and SCO2. Interacts with TMEM177 in a COX20-dependent manner. Interacts with COX20. Interacts with COX16. Cu cation serves as cofactor.

The protein resides in the mitochondrion inner membrane. The enzyme catalyses 4 Fe(II)-[cytochrome c] + O2 + 8 H(+)(in) = 4 Fe(III)-[cytochrome c] + 2 H2O + 4 H(+)(out). In terms of biological role, component of the cytochrome c oxidase, the last enzyme in the mitochondrial electron transport chain which drives oxidative phosphorylation. The respiratory chain contains 3 multisubunit complexes succinate dehydrogenase (complex II, CII), ubiquinol-cytochrome c oxidoreductase (cytochrome b-c1 complex, complex III, CIII) and cytochrome c oxidase (complex IV, CIV), that cooperate to transfer electrons derived from NADH and succinate to molecular oxygen, creating an electrochemical gradient over the inner membrane that drives transmembrane transport and the ATP synthase. Cytochrome c oxidase is the component of the respiratory chain that catalyzes the reduction of oxygen to water. Electrons originating from reduced cytochrome c in the intermembrane space (IMS) are transferred via the dinuclear copper A center (CU(A)) of subunit 2 and heme A of subunit 1 to the active site in subunit 1, a binuclear center (BNC) formed by heme A3 and copper B (CU(B)). The BNC reduces molecular oxygen to 2 water molecules using 4 electrons from cytochrome c in the IMS and 4 protons from the mitochondrial matrix. This is Cytochrome c oxidase subunit 2 (MT-CO2) from Halichoerus grypus (Gray seal).